The primary structure comprises 1399 residues: DNA-directed RNA polymerase subunit beta' (1399 aa).

Zn(2+)-binding residues include Cys-70, Cys-72, Cys-85, and Cys-88. 3 residues coordinate Mg(2+): Asp-460, Asp-462, and Asp-464. Cys-814, Cys-888, Cys-895, and Cys-898 together coordinate Zn(2+).

It belongs to the RNA polymerase beta' chain family. The RNAP catalytic core consists of 2 alpha, 1 beta, 1 beta' and 1 omega subunit. When a sigma factor is associated with the core the holoenzyme is formed, which can initiate transcription. Requires Mg(2+) as cofactor. Zn(2+) serves as cofactor.

It carries out the reaction RNA(n) + a ribonucleoside 5'-triphosphate = RNA(n+1) + diphosphate. Functionally, DNA-dependent RNA polymerase catalyzes the transcription of DNA into RNA using the four ribonucleoside triphosphates as substrates. In Stutzerimonas stutzeri (strain A1501) (Pseudomonas stutzeri), this protein is DNA-directed RNA polymerase subunit beta'.